Reading from the N-terminus, the 174-residue chain is Pituitary tumor-transforming gene 1 protein-interacting protein (174 aa).

The signal sequence occupies residues 1 to 29; sequence MAPANLGLTPHWVMLLGAVLLLLLSGASA. At 30–93 the chain is on the extracellular side; it reads QEPPRVGCSE…RWGVCWVNFE (64 aa). Residues 36–89 enclose the PSI domain; that stretch reads GCSEYTNRSCEECLRNVSCLWCNENKACMDYPVRKILPPASLCKLSSARWGVCW. N-linked (GlcNAc...) asparagine glycans are attached at residues asparagine 42 and asparagine 51. A helical membrane pass occupies residues 94–114; the sequence is ALIITMSVLGGSVLLGITVCC. At 115–174 the chain is on the cytoplasmic side; that stretch reads CYCCRRKKSRKPDKSDERAMREQEERRVRQEERRAEMKSRHDEIRKKYGLFKEQNPYEKF. The interval 125 to 155 is disordered; sequence KPDKSDERAMREQEERRVRQEERRAEMKSRH. Basic and acidic residues predominate over residues 126–155; that stretch reads PDKSDERAMREQEERRVRQEERRAEMKSRH. A coiled-coil region spans residues 127–163; that stretch reads DKSDERAMREQEERRVRQEERRAEMKSRHDEIRKKYG. Tyrosine 171 is subject to Phosphotyrosine.

As to quaternary structure, interacts with PTTG1.

It localises to the cell membrane. The protein localises to the cytoplasm. It is found in the nucleus. In terms of biological role, may facilitate PTTG1 nuclear translocation. In Mus musculus (Mouse), this protein is Pituitary tumor-transforming gene 1 protein-interacting protein (Pttg1ip).